The sequence spans 71 residues: MAIYKVFFQDDKSEVIVRENTHTIYVEGNSEEEVRKYLKNRDYNIEFITKLEGAHLEYEQQSEDYKVEHIQ.

The protein belongs to the RNA polymerase subunit epsilon family. As to quaternary structure, RNAP is composed of a core of 2 alpha, a beta and a beta' subunit. The core is associated with a delta subunit, and at least one of epsilon or omega. When a sigma factor is associated with the core the holoenzyme is formed, which can initiate transcription.

It catalyses the reaction RNA(n) + a ribonucleoside 5'-triphosphate = RNA(n+1) + diphosphate. Functionally, a non-essential component of RNA polymerase (RNAP). The chain is DNA-directed RNA polymerase subunit epsilon from Staphylococcus carnosus (strain TM300).